The sequence spans 353 residues: tRNA-splicing endonuclease (353 aa).

Catalysis depends on residues Tyr289, His300, and Lys331.

It belongs to the tRNA-intron endonuclease family. Archaeal long subfamily. In terms of assembly, homodimer.

It catalyses the reaction pretRNA = a 3'-half-tRNA molecule with a 5'-OH end + a 5'-half-tRNA molecule with a 2',3'-cyclic phosphate end + an intron with a 2',3'-cyclic phosphate and a 5'-hydroxyl terminus.. Endonuclease that removes tRNA introns. Cleaves pre-tRNA at the 5'- and 3'-splice sites to release the intron. The products are an intron and two tRNA half-molecules bearing 2',3' cyclic phosphate and 5'-OH termini. Recognizes a pseudosymmetric substrate in which 2 bulged loops of 3 bases are separated by a stem of 4 bp. This is tRNA-splicing endonuclease from Methanosarcina mazei (strain ATCC BAA-159 / DSM 3647 / Goe1 / Go1 / JCM 11833 / OCM 88) (Methanosarcina frisia).